Reading from the N-terminus, the 149-residue chain is UPF0260 protein Avin_32930 (149 aa).

The protein belongs to the UPF0260 family.

This chain is UPF0260 protein Avin_32930, found in Azotobacter vinelandii (strain DJ / ATCC BAA-1303).